Here is a 159-residue protein sequence, read N- to C-terminus: Ecotin (159 aa).

The first 22 residues, 1–22 (MRPTPMTAILALTLAAAAPAMA), serve as a signal peptide directing secretion. An intrachain disulfide couples C68 to C105.

It belongs to the protease inhibitor I11 (ecotin) family. Homodimer.

The protein localises to the periplasm. General inhibitor of family S1 serine proteases. This chain is Ecotin, found in Pseudomonas putida (strain GB-1).